The sequence spans 281 residues: ATP phosphoribosyltransferase (281 aa).

Belongs to the ATP phosphoribosyltransferase family. Long subfamily. Mg(2+) is required as a cofactor.

It localises to the cytoplasm. It catalyses the reaction 1-(5-phospho-beta-D-ribosyl)-ATP + diphosphate = 5-phospho-alpha-D-ribose 1-diphosphate + ATP. Its pathway is amino-acid biosynthesis; L-histidine biosynthesis; L-histidine from 5-phospho-alpha-D-ribose 1-diphosphate: step 1/9. Feedback inhibited by histidine. Catalyzes the condensation of ATP and 5-phosphoribose 1-diphosphate to form N'-(5'-phosphoribosyl)-ATP (PR-ATP). Has a crucial role in the pathway because the rate of histidine biosynthesis seems to be controlled primarily by regulation of HisG enzymatic activity. The sequence is that of ATP phosphoribosyltransferase from Corynebacterium glutamicum (strain R).